We begin with the raw amino-acid sequence, 356 residues long: Tetraacyldisaccharide 4'-kinase (356 aa).

51-58 (GWGGSGKT) is an ATP binding site.

Belongs to the LpxK family.

The catalysed reaction is a lipid A disaccharide + ATP = a lipid IVA + ADP + H(+). It participates in glycolipid biosynthesis; lipid IV(A) biosynthesis; lipid IV(A) from (3R)-3-hydroxytetradecanoyl-[acyl-carrier-protein] and UDP-N-acetyl-alpha-D-glucosamine: step 6/6. Functionally, transfers the gamma-phosphate of ATP to the 4'-position of a tetraacyldisaccharide 1-phosphate intermediate (termed DS-1-P) to form tetraacyldisaccharide 1,4'-bis-phosphate (lipid IVA). The protein is Tetraacyldisaccharide 4'-kinase of Oleidesulfovibrio alaskensis (strain ATCC BAA-1058 / DSM 17464 / G20) (Desulfovibrio alaskensis).